A 529-amino-acid polypeptide reads, in one-letter code: Plexin domain-containing protein 2 (529 aa).

Residues 1 to 30 form the signal peptide; the sequence is MARFPKADLAAAGVMLLCHFFTDQFQFADG. Residues 31–454 lie on the Extracellular side of the membrane; the sequence is KPGDQILDWQ…AEKKGGTLHA (424 aa). A disordered region spans residues 80–104; the sequence is ASVGQDSPEPRSFTDLLLDDGQDNN. Asparagine 103 and asparagine 160 each carry an N-linked (GlcNAc...) asparagine glycan. One can recognise a PSI domain in the interval 327 to 372; sequence TCLQFNRCGPCVSSQIGFNCSWCSKLQRCSSGFDRHRQDWVDSGCP. A helical membrane pass occupies residues 455–475; sequence GLIIGILILVLIVATAILVTV. Over 476–529 the chain is Cytoplasmic; the sequence is YMYHHPTSAASIFFIERRPSRWPAMKFRRGSGHPAYAEVEPVGEKEGFIVSEQC. Serine 506 is subject to Phosphoserine.

It belongs to the plexin family. In terms of assembly, interacts with CTTN. As to expression, expressed in the endothelial cells of the stroma but not in the endothelial cells of normal colonic tissue.

It localises to the membrane. In terms of biological role, may play a role in tumor angiogenesis. In Homo sapiens (Human), this protein is Plexin domain-containing protein 2 (PLXDC2).